We begin with the raw amino-acid sequence, 56 residues long: Conotoxin Bu12 (56 aa).

A signal peptide spans 1–2 (TA). Positions 3–25 (EDSRGTQLHRALRKATKLPVSTR) are excised as a propeptide. Intrachain disulfides connect cysteine 26–cysteine 40, cysteine 33–cysteine 44, and cysteine 39–cysteine 49.

It belongs to the conotoxin O1 superfamily. In terms of tissue distribution, expressed by the venom duct.

Its subcellular location is the secreted. This is Conotoxin Bu12 from Conus bullatus (Bubble cone).